The sequence spans 442 residues: Elongation factor 1-alpha 1 (442 aa).

In terms of domain architecture, tr-type G spans Lys5–Lys227. The interval Gly14–Ser21 is G1. A GTP-binding site is contributed by Gly14 to Ser21. Positions Gly70–Asp74 are G2. A G3 region spans residues Asp91–Gly94. GTP is bound by residues Asp91–His95 and Asn153–Asp156. The segment at Asn153–Asp156 is G4. Positions Ser194–Phe196 are G5.

It belongs to the TRAFAC class translation factor GTPase superfamily. Classic translation factor GTPase family. EF-Tu/EF-1A subfamily.

The protein localises to the cytoplasm. Functionally, this protein promotes the GTP-dependent binding of aminoacyl-tRNA to the A-site of ribosomes during protein biosynthesis. The sequence is that of Elongation factor 1-alpha 1 (EFA1) from Euplotes crassus.